Here is an 803-residue protein sequence, read N- to C-terminus: MTFNHKKMEPKWQQYWSEHNTFKTTEDKDKENFYALDMFPYPSGAGLHVGHPEGYTATDILSRMKRMQGKNVLHPIGWDAFGLPAEQYAIDTGNDPEEFTALNIANFTRQIKSLGFSYDWDREINTTDPEYYKWTQWIFEKLYENGLAYEAEIAVNWCPALGTVLANEEVIDGKSERGGFPVFRKPMRQWMLKITAYADRLLDDLELVDWPENIKDMQRNWIGRSEGAEVTFKIKDSDETFNVFTTRPDTLFGATYTVFAPEHELIEKITTPEQKEAVEAYKKQVELKSELERTDLAKDKTGVFTGAYAINPINGEEVPIWIADYVLIQYGTGAIMAVPAHDERDFEFAQQFGLNIRPVLEGGDVTKEAFTGDGPHINSDFLNGLAKAEAITAAIDWLEKEGIGSRKITYRLRDWLFSRQRYWGEPIPVIHWEDGETTLVPEDELPLLLPKATEIKPSGTGESPLANLHDWVNVTDENGRKGRRETNTMPQWAGSSWYFLRYIDPKNSEAIADKEKLAEWLPVDVYIGGAEHAVLHLLYARFWHKFLYDIGVVPTKEPFQKLFNQGMILGENNEKMSKSRGNVVNPDEVVEKYGADTLRLYEMFMGPLEASIAWNENGLEGARKFLDRIWRLLVTEEGTLAEKVTTDANANLEKAYHHMVKTVTNHYENLRFNTGISQLMIFINEAYKRDTIPKQYVEGFVQLLSPIAPHLAEELWEILGHTETISYVAWPTYDETKLVEDEVEIVLQVNGKVKSKITVAKSLGKEELEKLAHEDDKIKENIDGKTIRKVIVVPGKLVNIVAN.

Residues 40-51 (PYPSGAGLHVGH) carry the 'HIGH' region motif. The short motif at 575–579 (KMSKS) is the 'KMSKS' region element. Lys578 contributes to the ATP binding site.

This sequence belongs to the class-I aminoacyl-tRNA synthetase family.

Its subcellular location is the cytoplasm. It catalyses the reaction tRNA(Leu) + L-leucine + ATP = L-leucyl-tRNA(Leu) + AMP + diphosphate. This Listeria innocua serovar 6a (strain ATCC BAA-680 / CLIP 11262) protein is Leucine--tRNA ligase.